The sequence spans 187 residues: GTP cyclohydrolase 1 (187 aa).

3 residues coordinate Zn(2+): C76, H79, and C148.

This sequence belongs to the GTP cyclohydrolase I family. Homomer.

It carries out the reaction GTP + H2O = 7,8-dihydroneopterin 3'-triphosphate + formate + H(+). It functions in the pathway cofactor biosynthesis; 7,8-dihydroneopterin triphosphate biosynthesis; 7,8-dihydroneopterin triphosphate from GTP: step 1/1. In Desulforamulus reducens (strain ATCC BAA-1160 / DSM 100696 / MI-1) (Desulfotomaculum reducens), this protein is GTP cyclohydrolase 1.